A 505-amino-acid polypeptide reads, in one-letter code: Lysine--tRNA ligase (505 aa).

Residues E415 and E422 each contribute to the Mg(2+) site.

The protein belongs to the class-II aminoacyl-tRNA synthetase family. In terms of assembly, homodimer. The cofactor is Mg(2+).

The protein localises to the cytoplasm. It catalyses the reaction tRNA(Lys) + L-lysine + ATP = L-lysyl-tRNA(Lys) + AMP + diphosphate. In Shigella flexneri, this protein is Lysine--tRNA ligase.